The sequence spans 134 residues: Putative capsid protein (134 aa).

Homodimer.

It localises to the virion. Self-assembles to form a helical, filamentous nucleocapsid. The capsid proteins wrap around the DNA and maintain it in an A-form by non-specific desolvation and specific coordination of the DNA phosphate groups by positively charged residues. This certainly protects the viral DNA under conditions such as the extreme desiccation of its host. In Sulfolobus islandicus rod-shaped virus 1 (SIRV-1), this protein is Putative capsid protein.